The chain runs to 360 residues: Peptide chain release factor 1 (360 aa).

Gln235 is subject to N5-methylglutamine. Residues 285–313 are disordered; it reads KRQQAEASTRRNLLGSGDRSDRNRTYNFP.

This sequence belongs to the prokaryotic/mitochondrial release factor family. In terms of processing, methylated by PrmC. Methylation increases the termination efficiency of RF1.

The protein localises to the cytoplasm. Its function is as follows. Peptide chain release factor 1 directs the termination of translation in response to the peptide chain termination codons UAG and UAA. The sequence is that of Peptide chain release factor 1 from Salmonella paratyphi A (strain ATCC 9150 / SARB42).